The sequence spans 434 residues: uncharacterized protein (434 aa).

5 helical membrane-spanning segments follow: residues 27–47, 64–84, 244–264, 289–309, and 387–407; these read IFLL…QSVI, FYLS…FVNW, IILA…ATVL, VPVN…PSLL, and LILT…GAVF.

Belongs to the CbiQ family.

It localises to the cell membrane. This is an uncharacterized protein from Mycoplasma pneumoniae (strain ATCC 29342 / M129 / Subtype 1) (Mycoplasmoides pneumoniae).